Reading from the N-terminus, the 475-residue chain is Ammonium transporter Rh type C (475 aa).

At 1 to 20 (MGCVQSFRNFCDRPKNTNVR) the chain is on the cytoplasmic side. A helical transmembrane segment spans residues 21–41 (ISLPAVCFVWQIAMIILFGVF). The Extracellular segment spans residues 42 to 73 (IRYNEEADTHWVEYRKKENISSDIENDFYFRY). N60 carries N-linked (GlcNAc...) asparagine glycosylation. Residues 74-94 (PSFQDVHVMIFVGFGFLMTFL) traverse the membrane as a helical segment. Over 95-98 (KRYS) the chain is Cytoplasmic. The helical transmembrane segment at 99–119 (FGAVGFNFLIAAFGLQWALLM) threads the bilayer. Residues 120-138 (QGWFHSLDYTDGKIKIGIE) are Extracellular-facing. Residues 139–159 (NLINADFCVAGCLIAYGAVLG) traverse the membrane as a helical segment. Residues 160-167 (KVSPVQLM) lie on the Cytoplasmic side of the membrane. A helical transmembrane segment spans residues 168-188 (VLTLFGITLFAVEEYIILNLI). Topologically, residues 189–193 (HARDA) are extracellular. Residues 194 to 214 (GGSMVIHTFGGYYGLSISWML) traverse the membrane as a helical segment. Residues 215 to 233 (YRPNLEQSSNLQGSVYQSD) lie on the Cytoplasmic side of the membrane. A helical transmembrane segment spans residues 234-254 (VFAMIGTLFLWMFWPSFNSAI). Residues 255–265 (TDHGDGQHRAA) are Extracellular-facing. Residues 266 to 286 (INTYLALASTVLTTVAISSLF) form a helical membrane-spanning segment. Topologically, residues 287 to 299 (QKHGKLDMVHIQN) are cytoplasmic. A helical transmembrane segment spans residues 300–320 (STLAGGVAVGTAAEFMLMPYG). Position 321 (S321) is a topological domain, extracellular. The helical transmembrane segment at 322 to 342 (LIVGFCCGIISTLGYIYLTPF) threads the bilayer. Residues 343 to 357 (MEKYLKIQDTCGIHN) are Cytoplasmic-facing. Residues 358 to 378 (LHAMPGLIGGIVGAITAAAAT) form a helical membrane-spanning segment. Residues 379-410 (ESVYGKEGLVNTFDFVGPFKNMVPTTQGGHQA) are Extracellular-facing. The chain crosses the membrane as a helical span at residues 411 to 431 (AGLCVAICFGIGGGIMVGCIL). At 432–475 (RLPIWCDPADDNCFNDEPYWELPEEEEIIPPILHYNNHMVNKDV) the chain is on the cytoplasmic side.

The protein belongs to the ammonium transporter (TC 2.A.49) family. Rh subfamily. In terms of assembly, homotrimer.

The protein localises to the apical cell membrane. In terms of biological role, functions as an ammonia transporter. May play a role in the elimination of ammonia in the gill. The chain is Ammonium transporter Rh type C (rhcg) from Tetraodon nigroviridis (Spotted green pufferfish).